Consider the following 252-residue polypeptide: Chitooligosaccharide deacetylase (252 aa).

Mg(2+)-binding residues include histidine 61 and histidine 125.

This sequence belongs to the YdjC deacetylase family. ChbG subfamily. As to quaternary structure, homodimer. Mg(2+) is required as a cofactor.

Its subcellular location is the cytoplasm. It catalyses the reaction N,N'-diacetylchitobiose + H2O = N-acetyl-beta-D-glucosaminyl-(1-&gt;4)-D-glucosamine + acetate. The catalysed reaction is diacetylchitobiose-6'-phosphate + H2O = N'-monoacetylchitobiose-6'-phosphate + acetate. It participates in glycan degradation; chitin degradation. In terms of biological role, involved in the degradation of chitin. ChbG is essential for growth on the acetylated chitooligosaccharides chitobiose and chitotriose but is dispensable for growth on cellobiose and chitosan dimer, the deacetylated form of chitobiose. Deacetylation of chitobiose-6-P and chitotriose-6-P is necessary for both the activation of the chb promoter by the regulatory protein ChbR and the hydrolysis of phosphorylated beta-glucosides by the phospho-beta-glucosidase ChbF. Catalyzes the removal of only one acetyl group from chitobiose-6-P to yield monoacetylchitobiose-6-P, the inducer of ChbR and the substrate of ChbF. In Klebsiella pneumoniae subsp. pneumoniae (strain ATCC 700721 / MGH 78578), this protein is Chitooligosaccharide deacetylase.